A 317-amino-acid polypeptide reads, in one-letter code: Glycine--tRNA ligase alpha subunit (317 aa).

Belongs to the class-II aminoacyl-tRNA synthetase family. As to quaternary structure, tetramer of two alpha and two beta subunits.

It localises to the cytoplasm. It catalyses the reaction tRNA(Gly) + glycine + ATP = glycyl-tRNA(Gly) + AMP + diphosphate. This is Glycine--tRNA ligase alpha subunit from Pseudomonas fluorescens (strain ATCC BAA-477 / NRRL B-23932 / Pf-5).